A 302-amino-acid chain; its full sequence is Putative peptide permease protein BMEII0861 (302 aa).

A disordered region spans residues 1–22; the sequence is MRSSIHASRLRKMGQSIPASTG. A run of 5 helical transmembrane segments spans residues 38–58, 101–121, 147–167, 230–250, and 268–288; these read IFGL…PLWL, LLVA…IGAI, IFLL…VVVI, ILLE…AASW, and WQWL…NFIG. Residues 97 to 288 form the ABC transmembrane type-1 domain; sequence GRISLLVAVS…LAVLAINFIG (192 aa).

Belongs to the binding-protein-dependent transport system permease family. In terms of assembly, the complex is composed of two ATP-binding proteins (BMEII0863 and BMEII0864), two transmembrane proteins (BMEII0860 and BMEII0861) and a solute-binding protein (BMEII0859).

It is found in the cell inner membrane. Its function is as follows. Probably part of an ABC transporter complex that could be involved in peptide import. Probably responsible for the translocation of the substrate across the membrane. In Brucella melitensis biotype 1 (strain ATCC 23456 / CCUG 17765 / NCTC 10094 / 16M), this protein is Putative peptide permease protein BMEII0861.